The primary structure comprises 258 residues: Acetylglutamate kinase (258 aa).

Substrate contacts are provided by residues 41–42 (GG), arginine 63, and asparagine 156.

The protein belongs to the acetylglutamate kinase family. ArgB subfamily. Homodimer.

It localises to the cytoplasm. The enzyme catalyses N-acetyl-L-glutamate + ATP = N-acetyl-L-glutamyl 5-phosphate + ADP. The protein operates within amino-acid biosynthesis; L-arginine biosynthesis; N(2)-acetyl-L-ornithine from L-glutamate: step 2/4. Catalyzes the ATP-dependent phosphorylation of N-acetyl-L-glutamate. The sequence is that of Acetylglutamate kinase from Geobacillus stearothermophilus (Bacillus stearothermophilus).